Here is a 127-residue protein sequence, read N- to C-terminus: Large ribosomal subunit protein bL17 (127 aa).

This sequence belongs to the bacterial ribosomal protein bL17 family. In terms of assembly, part of the 50S ribosomal subunit. Contacts protein L32.

This chain is Large ribosomal subunit protein bL17, found in Xanthomonas oryzae pv. oryzae (strain KACC10331 / KXO85).